A 173-amino-acid polypeptide reads, in one-letter code: Adenine phosphoribosyltransferase (173 aa).

It belongs to the purine/pyrimidine phosphoribosyltransferase family. As to quaternary structure, homodimer.

It is found in the cytoplasm. The catalysed reaction is AMP + diphosphate = 5-phospho-alpha-D-ribose 1-diphosphate + adenine. Its pathway is purine metabolism; AMP biosynthesis via salvage pathway; AMP from adenine: step 1/1. Functionally, catalyzes a salvage reaction resulting in the formation of AMP, that is energically less costly than de novo synthesis. This chain is Adenine phosphoribosyltransferase, found in Desulfitobacterium hafniense (strain Y51).